Reading from the N-terminus, the 660-residue chain is Kinesin-like protein KIF22 (660 aa).

Residues 1 to 31 are disordered; that stretch reads MSLRAKTCPQRREMASATSGPGRCVSKGGLG. Residues 38 to 363 form the Kinesin motor domain; it reads RVRVAVRLRP…LNFTARSKEV (326 aa). 122 to 129 is an ATP binding site; sequence GPTGAGKT. Residues 391-418 are disordered; it reads PSEAKKAKGPEEESTGSPESTAAPASAS. Low complexity predominate over residues 405–418; sequence TGSPESTAAPASAS. A phosphoserine mark is found at Ser407, Ser422, and Ser447. A Glycyl lysine isopeptide (Lys-Gly) (interchain with G-Cter in SUMO2) cross-link involves residue Lys460. The stretch at 460 to 505 forms a coiled coil; sequence KRERMVLMKTVEEKNLEIERLKMKQKELEAKVLAQEAPDPREKENT. Disordered stretches follow at residues 493-516 and 534-567; these read AQEAPDPREKENTPTILQPPASYS and IQKQRESSNQIQLLKKGPKRKLEPSPESEAVEKD. Residues 505-516 show a composition bias toward polar residues; it reads TPTILQPPASYS. 2 positions are modified to phosphoserine: Ser540 and Ser576.

This sequence belongs to the TRAFAC class myosin-kinesin ATPase superfamily. Kinesin family. Interacts with FAM83D and SIAH1. Ubiquitinated; mediated by SIAH1 and leading to its subsequent proteasomal degradation.

It localises to the nucleus. It is found in the cytoplasm. Its subcellular location is the cytoskeleton. Its function is as follows. Kinesin family member that is involved in spindle formation and the movements of chromosomes during mitosis and meiosis. Binds to microtubules and to DNA. Plays a role in congression of laterally attached chromosomes in NDC80-depleted cells. The polypeptide is Kinesin-like protein KIF22 (Kif22) (Mus musculus (Mouse)).